Reading from the N-terminus, the 522-residue chain is Lysine--tRNA ligase (522 aa).

The 'HIGH' region motif lies at 44–52; the sequence is PSGLPHIGT. The 'KMSKS' region signature appears at 290 to 294; that stretch reads KISKS. Residue Lys-293 participates in ATP binding.

This sequence belongs to the class-I aminoacyl-tRNA synthetase family.

It localises to the cytoplasm. The enzyme catalyses tRNA(Lys) + L-lysine + ATP = L-lysyl-tRNA(Lys) + AMP + diphosphate. In Rickettsia rickettsii (strain Iowa), this protein is Lysine--tRNA ligase.